Reading from the N-terminus, the 407-residue chain is Homeobox even-skipped homolog protein 1 (407 aa).

2 disordered regions span residues 29-120 (EAVG…SDFY) and 137-179 (EYQH…ACSA). Residues 102–114 (DSLSGQGQPSSSD) show a composition bias toward polar residues. The homeobox DNA-binding region spans 183-242 (MRRYRTAFTREQIARLEKEFYRENYVSRPRRCELAAALNLPETTIKVWFQNRRMKDKRQR).

This sequence belongs to the even-skipped homeobox family.

It localises to the nucleus. In terms of biological role, may play a role in the specification of neuronal cell types. This is Homeobox even-skipped homolog protein 1 (EVX1) from Homo sapiens (Human).